Here is a 68-residue protein sequence, read N- to C-terminus: Coiled-coil domain-containing protein 179 (68 aa).

The interval 11–68 is disordered; sequence SQVNPEGPRQHHPSEVTERQLANKRIQNMQHLKKEKRRLNKRFSRPSPIPEPGLLWSS. Basic and acidic residues predominate over residues 18–28; the sequence is PRQHHPSEVTE. Residues 27–53 adopt a coiled-coil conformation; it reads TERQLANKRIQNMQHLKKEKRRLNKRF. Basic residues predominate over residues 41 to 54; it reads HLKKEKRRLNKRFS.

The sequence is that of Coiled-coil domain-containing protein 179 (CCDC179) from Homo sapiens (Human).